The chain runs to 245 residues: NAD-dependent protein deacylase (245 aa).

A Deacetylase sirtuin-type domain is found at 1–237; that stretch reads MNFPYRNIVV…PKLVEELLAH (237 aa). 13–32 contributes to the NAD(+) binding site; sequence GAGISAESGIQTFRAQDGLW. Substrate-binding residues include tyrosine 57 and arginine 60. 94–97 is an NAD(+) binding site; sequence QNID. Histidine 112 (proton acceptor) is an active-site residue. Residues cysteine 120 and cysteine 139 each coordinate Zn(2+). NAD(+)-binding positions include 179–181, 205–207, and alanine 223; these read GTS and NLE.

This sequence belongs to the sirtuin family. Class III subfamily. Zn(2+) is required as a cofactor.

The protein localises to the cytoplasm. It carries out the reaction N(6)-acetyl-L-lysyl-[protein] + NAD(+) + H2O = 2''-O-acetyl-ADP-D-ribose + nicotinamide + L-lysyl-[protein]. The catalysed reaction is N(6)-succinyl-L-lysyl-[protein] + NAD(+) + H2O = 2''-O-succinyl-ADP-D-ribose + nicotinamide + L-lysyl-[protein]. NAD-dependent lysine deacetylase and desuccinylase that specifically removes acetyl and succinyl groups on target proteins. Modulates the activities of several proteins which are inactive in their acylated form. In Vibrio vulnificus (strain YJ016), this protein is NAD-dependent protein deacylase.